The primary structure comprises 1417 residues: DNA-directed RNA polymerase subunit beta' (1417 aa).

The Zn(2+) site is built by C68, C70, C83, and C86. 3 residues coordinate Mg(2+): D458, D460, and D462. 4 residues coordinate Zn(2+): C811, C884, C891, and C894.

This sequence belongs to the RNA polymerase beta' chain family. The RNAP catalytic core consists of 2 alpha, 1 beta, 1 beta' and 1 omega subunit. When a sigma factor is associated with the core the holoenzyme is formed, which can initiate transcription. It depends on Mg(2+) as a cofactor. Zn(2+) serves as cofactor.

The enzyme catalyses RNA(n) + a ribonucleoside 5'-triphosphate = RNA(n+1) + diphosphate. Its function is as follows. DNA-dependent RNA polymerase catalyzes the transcription of DNA into RNA using the four ribonucleoside triphosphates as substrates. This Francisella tularensis subsp. holarctica (strain OSU18) protein is DNA-directed RNA polymerase subunit beta'.